The primary structure comprises 590 residues: Protein NRT1/ PTR FAMILY 8.5 (590 aa).

A helical membrane pass occupies residues 96-116 (ASDVMIWQGTCYITPLIGAVI). Threonine 126 bears the Phosphothreonine mark. Helical transmembrane passes span 130-150 (FSAIYFIGMALLTLSASLPVL), 168-188 (TVQYAVFFTGLYLIALGTGGI), 214-234 (FFNWFYFSINIGSFISSTLLV), 242-262 (WGLGFLIPTVFMGVSIASFFI), 365-385 (FPIWASGIVYSVLYSQISTLF), 401-421 (IPPASFGVFDTLIVLISIPIY), 445-465 (MGIGLFLSVLSIAAAAIVETV), 478-498 (IFWQIPQYILMGIAEVFFFIG), 524-544 (AVGSYLSSLILTLVAYFTALG), and 562-582 (FFWLLVSLGLVNIPVYALICV).

It belongs to the major facilitator superfamily. Proton-dependent oligopeptide transporter (POT/PTR) (TC 2.A.17) family. Expressed in shoots, roots, stems, leaves, flowers and siliques.

Its subcellular location is the membrane. The polypeptide is Protein NRT1/ PTR FAMILY 8.5 (NPF8.5) (Arabidopsis thaliana (Mouse-ear cress)).